The primary structure comprises 261 residues: tRNA pseudouridine synthase A (261 aa).

D51 functions as the Nucleophile in the catalytic mechanism. Residue Y109 coordinates substrate.

Belongs to the tRNA pseudouridine synthase TruA family. Homodimer.

It carries out the reaction uridine(38/39/40) in tRNA = pseudouridine(38/39/40) in tRNA. Formation of pseudouridine at positions 38, 39 and 40 in the anticodon stem and loop of transfer RNAs. The chain is tRNA pseudouridine synthase A from Photobacterium profundum (strain SS9).